We begin with the raw amino-acid sequence, 463 residues long: Argininosuccinate lyase (463 aa).

This sequence belongs to the lyase 1 family. Argininosuccinate lyase subfamily.

Its subcellular location is the cytoplasm. The enzyme catalyses 2-(N(omega)-L-arginino)succinate = fumarate + L-arginine. The protein operates within amino-acid biosynthesis; L-arginine biosynthesis; L-arginine from L-ornithine and carbamoyl phosphate: step 3/3. The polypeptide is Argininosuccinate lyase (Streptococcus pneumoniae serotype 2 (strain D39 / NCTC 7466)).